The sequence spans 249 residues: Putative NAD(+)--arginine ADP-ribosyltransferase Vis (249 aa).

An N-terminal signal peptide occupies residues 1–18 (MNTRFLLLLCCLSFTTFS). The TR mART core domain occupies 31 to 223 (EEEVTQLAED…IGVETVKASA (193 aa)). Residues 68-80 (SISG…DYLR), 117-120 (RGTW), and Glu137 contribute to the NAD(+) site. Arg117 is an active-site residue. Active-site residues include Ser142 and Glu191. Glu191 is a binding site for NAD(+).

The protein belongs to the Arg-specific ADP-ribosyltransferase family.

It localises to the secreted. The enzyme catalyses L-arginyl-[protein] + NAD(+) = N(omega)-(ADP-D-ribosyl)-L-arginyl-[protein] + nicotinamide + H(+). A probable mono(ADP-ribosyl)transferase, it may ADP-ribosylate Arg in target protein(s). Upon expression in yeast cells causes cell death. The sequence is that of Putative NAD(+)--arginine ADP-ribosyltransferase Vis from Vibrio splendidus (strain 12B01).